The following is a 184-amino-acid chain: Holliday junction branch migration complex subunit RuvA (184 aa).

A domain I region spans residues methionine 1 to alanine 61. The interval aspartate 62–glutamine 135 is domain II. A region of interest (flexible linker) is located at residue glutamine 135. Positions glutamine 135 to lysine 184 are domain III.

The protein belongs to the RuvA family. As to quaternary structure, homotetramer. Forms an RuvA(8)-RuvB(12)-Holliday junction (HJ) complex. HJ DNA is sandwiched between 2 RuvA tetramers; dsDNA enters through RuvA and exits via RuvB. An RuvB hexamer assembles on each DNA strand where it exits the tetramer. Each RuvB hexamer is contacted by two RuvA subunits (via domain III) on 2 adjacent RuvB subunits; this complex drives branch migration. In the full resolvosome a probable DNA-RuvA(4)-RuvB(12)-RuvC(2) complex forms which resolves the HJ.

It is found in the cytoplasm. Functionally, the RuvA-RuvB-RuvC complex processes Holliday junction (HJ) DNA during genetic recombination and DNA repair, while the RuvA-RuvB complex plays an important role in the rescue of blocked DNA replication forks via replication fork reversal (RFR). RuvA specifically binds to HJ cruciform DNA, conferring on it an open structure. The RuvB hexamer acts as an ATP-dependent pump, pulling dsDNA into and through the RuvAB complex. HJ branch migration allows RuvC to scan DNA until it finds its consensus sequence, where it cleaves and resolves the cruciform DNA. The polypeptide is Holliday junction branch migration complex subunit RuvA (Nautilia profundicola (strain ATCC BAA-1463 / DSM 18972 / AmH)).